Here is a 423-residue protein sequence, read N- to C-terminus: AP-1 complex subunit mu-2 (423 aa).

Residues 168 to 421 (KNEVFIDVIE…ITQSGDYQLR (254 aa)) enclose the MHD domain.

It belongs to the adaptor complexes medium subunit family. Adaptor protein complex 1 (AP-1) is a heterotetramer composed of two large adaptins (gamma-type subunit AP1G1 and beta-type subunit AP1B1), a medium adaptin (mu-type subunit AP1M1 or AP1M2) and a small adaptin (sigma-type subunit AP1S1 or AP1S2 or AP1S3). Interacts with P2X4. Phosphorylation of membrane-bound AP1M1/AP1M2 increases its affinity for sorting signals.

Its subcellular location is the golgi apparatus. The protein localises to the cytoplasmic vesicle. It is found in the clathrin-coated vesicle membrane. Its function is as follows. Subunit of clathrin-associated adaptor protein complex 1 that plays a role in protein sorting in the trans-Golgi network (TGN) and endosomes. The AP complexes mediate the recruitment of clathrin to membranes and the recognition of sorting signals within the cytosolic tails of transmembrane cargo molecules. In Homo sapiens (Human), this protein is AP-1 complex subunit mu-2 (AP1M2).